We begin with the raw amino-acid sequence, 236 residues long: Small ribosomal subunit protein uS2c (236 aa).

Belongs to the universal ribosomal protein uS2 family.

Its subcellular location is the plastid. The protein resides in the chloroplast. This Piper cenocladum (Ant piper) protein is Small ribosomal subunit protein uS2c (rps2).